Consider the following 691-residue polypeptide: Pentatricopeptide repeat-containing protein At4g37170 (691 aa).

PPR repeat units follow at residues P84–P118, G119–R149, D150–S184, W185–V211, N217–S251, D252–S286, W287–P317, N318–P352, Y353–P383, D384–P418, D419–K449, and T455–K485. Residues L490–K565 are type E motif. Positions R566–K596 are type E(+) motif. The segment at E597–W691 is type DYW motif.

The protein belongs to the PPR family. PCMP-H subfamily.

This chain is Pentatricopeptide repeat-containing protein At4g37170 (PCMP-H5), found in Arabidopsis thaliana (Mouse-ear cress).